Reading from the N-terminus, the 373-residue chain is Lipoyl synthase (373 aa).

The interval 14–36 (VSNDHPSSSPLQPGVKQSGEDKI) is disordered. [4Fe-4S] cluster-binding residues include Cys-81, Cys-86, Cys-92, Cys-107, Cys-111, Cys-114, and Ser-323. One can recognise a Radical SAM core domain in the interval 93–312 (FSHGTATFMI…EEYGMALGFS (220 aa)). The disordered stretch occupies residues 346–373 (PAVSSTEHRERNTIASKSASKTESIHHR). The span at 358–367 (TIASKSASKT) shows a compositional bias: polar residues.

Belongs to the radical SAM superfamily. Lipoyl synthase family. Requires [4Fe-4S] cluster as cofactor.

The protein localises to the cytoplasm. It catalyses the reaction [[Fe-S] cluster scaffold protein carrying a second [4Fe-4S](2+) cluster] + N(6)-octanoyl-L-lysyl-[protein] + 2 oxidized [2Fe-2S]-[ferredoxin] + 2 S-adenosyl-L-methionine + 4 H(+) = [[Fe-S] cluster scaffold protein] + N(6)-[(R)-dihydrolipoyl]-L-lysyl-[protein] + 4 Fe(3+) + 2 hydrogen sulfide + 2 5'-deoxyadenosine + 2 L-methionine + 2 reduced [2Fe-2S]-[ferredoxin]. It participates in protein modification; protein lipoylation via endogenous pathway; protein N(6)-(lipoyl)lysine from octanoyl-[acyl-carrier-protein]: step 2/2. Functionally, catalyzes the radical-mediated insertion of two sulfur atoms into the C-6 and C-8 positions of the octanoyl moiety bound to the lipoyl domains of lipoate-dependent enzymes, thereby converting the octanoylated domains into lipoylated derivatives. The sequence is that of Lipoyl synthase from Xylella fastidiosa (strain M23).